A 269-amino-acid polypeptide reads, in one-letter code: Mitochondrial S-adenosylmethionine carrier protein (269 aa).

3 Solcar repeats span residues 4–77 (REFC…AKQL), 85–167 (LSPI…LKDL), and 176–264 (VDSW…VRTL). A run of 6 helical transmembrane segments spans residues 5–25 (EFCASLLAGGTAGMCVDLILF), 49–69 (IYAGVPSTAVGSFPNAAAFFV), 84–104 (YLSPIIHMAAASLGEVVACLI), 141–161 (RGYKSTVLREIPFSLVQFPLW), 181–201 (SAVCGAFAGGFAAALTTPLDV), and 237–257 (FAGVIPRMTAISLGGFIFLGA).

This sequence belongs to the mitochondrial carrier (TC 2.A.29) family.

The protein localises to the mitochondrion inner membrane. It carries out the reaction S-adenosyl-L-homocysteine(out) + S-adenosyl-L-methionine(in) = S-adenosyl-L-homocysteine(in) + S-adenosyl-L-methionine(out). Mitochondrial S-adenosyl-L-methionine/S-adenosyl-L-homocysteine antiporter. Mediates the exchange of cytosolic S-adenosyl-L-methionine, the predominant methyl-group donor for macromolecule methylation processes, for mitochondrial S-adenosylhomocysteine(SAH), a by-product of methylation reactions. The protein is Mitochondrial S-adenosylmethionine carrier protein (slc25a26) of Xenopus tropicalis (Western clawed frog).